The primary structure comprises 306 residues: Pantothenate kinase (306 aa).

91-98 (GSVAVGKS) is an ATP binding site.

This sequence belongs to the prokaryotic pantothenate kinase family.

It is found in the cytoplasm. The catalysed reaction is (R)-pantothenate + ATP = (R)-4'-phosphopantothenate + ADP + H(+). The protein operates within cofactor biosynthesis; coenzyme A biosynthesis; CoA from (R)-pantothenate: step 1/5. The sequence is that of Pantothenate kinase from Streptococcus thermophilus (strain ATCC BAA-491 / LMD-9).